The chain runs to 418 residues: Diaminopimelate decarboxylase (418 aa).

The residue at position 53 (K53) is an N6-(pyridoxal phosphate)lysine. Pyridoxal 5'-phosphate is bound by residues G223 and 264–267; that span reads EPGR. The substrate site is built by R267, R303, and Y307. Residue C338 is the Proton donor of the active site. Residues E339 and Y374 each coordinate substrate. Y374 contacts pyridoxal 5'-phosphate.

The protein belongs to the Orn/Lys/Arg decarboxylase class-II family. LysA subfamily. In terms of assembly, homodimer. Pyridoxal 5'-phosphate is required as a cofactor.

The enzyme catalyses meso-2,6-diaminopimelate + H(+) = L-lysine + CO2. It participates in amino-acid biosynthesis; L-lysine biosynthesis via DAP pathway; L-lysine from DL-2,6-diaminopimelate: step 1/1. Its function is as follows. Specifically catalyzes the decarboxylation of meso-diaminopimelate (meso-DAP) to L-lysine. The sequence is that of Diaminopimelate decarboxylase from Buchnera aphidicola subsp. Baizongia pistaciae (strain Bp).